Consider the following 664-residue polypeptide: L-glutamate oxidase precursor (664 aa).

The tat-type signal signal peptide spans 1–44; the sequence is MTEDHAVVRSDGGLSRRSFAAVAGTATVATALTSGVAAALPAPA. Residues alanine 105, glutamate 124, alanine 125, arginine 133, methionine 161, arginine 162, aspartate 638, tryptophan 646, and isoleucine 647 each contribute to the FAD site.

This sequence belongs to the flavin monoamine oxidase family. LGOX subfamily. In terms of assembly, the mature enzyme is a heterohexamer composed of 2 alpha chains, 2 beta chains and 2 gamma chains (alpha2beta2gamma2). It depends on FAD as a cofactor. In terms of processing, predicted to be exported by the Tat system. The position of the signal peptide cleavage has not been experimentally proven. Post-translationally, the precursor form is proteolytically cleaved by an endopeptidase into alpha, beta and gamma chains, which form the stable mature enzyme.

It localises to the secreted. It carries out the reaction L-glutamate + O2 + H2O = H2O2 + 2-oxoglutarate + NH4(+). Its activity is regulated as follows. Activity is stimulated in the presence of Mn(2+), Ca(2+) or Mg(2+). Functionally, catalyzes the oxidative deamination of L-glutamate to 2-ketoglutarate along with the production of ammonia and hydrogen peroxide. This Streptomyces viridosporus (strain ATCC 14672 / DSM 40746 / JCM 4963 / KCTC 9882 / NRRL B-12104 / FH 1290) (Streptomyces ghanaensis) protein is L-glutamate oxidase precursor.